The chain runs to 269 residues: Ribonuclease HII (269 aa).

Residues 83 to 269 (YLIAGVDEVG…HRMSFLTNIL (187 aa)) form the RNase H type-2 domain. 3 residues coordinate a divalent metal cation: D89, E90, and D185.

It belongs to the RNase HII family. It depends on Mn(2+) as a cofactor. Mg(2+) is required as a cofactor.

Its subcellular location is the cytoplasm. The catalysed reaction is Endonucleolytic cleavage to 5'-phosphomonoester.. In terms of biological role, endonuclease that specifically degrades the RNA of RNA-DNA hybrids. The chain is Ribonuclease HII from Clostridium botulinum (strain Hall / ATCC 3502 / NCTC 13319 / Type A).